We begin with the raw amino-acid sequence, 120 residues long: Ig heavy chain V region AC38 15.3 (120 aa).

A v segment region spans residues 1-98 (QVQLLQPGTE…EDSAVYYCAR (98 aa)). A disulfide bridge links Cys22 with Cys96. Residues 99–105 (WDYEGDR) are d segment. Positions 106-120 (YFDVWGTGTTVTVSS) are j segment.

The sequence is that of Ig heavy chain V region AC38 15.3 from Mus musculus (Mouse).